The chain runs to 409 residues: Probable ATP-dependent RNA helicase MG308 homolog (409 aa).

The Helicase ATP-binding domain maps to 26–179 (VFKVWPRQNV…RKQVAPLTVV (154 aa)). 39-46 (AETGSGKT) lines the ATP pocket. Positions 126-129 (DEVD) match the DEVD box motif. The region spanning 190–349 (LVKHFLLNLN…SVHLERDGTL (160 aa)) is the Helicase C-terminal domain.

The protein belongs to the DEAD box helicase family.

The enzyme catalyses ATP + H2O = ADP + phosphate + H(+). This chain is Probable ATP-dependent RNA helicase MG308 homolog, found in Mycoplasma pneumoniae (strain ATCC 29342 / M129 / Subtype 1) (Mycoplasmoides pneumoniae).